A 440-amino-acid chain; its full sequence is Endoplasmic reticulum junction formation protein lunapark (440 aa).

Residues methionine 1–arginine 45 are Cytoplasmic-facing. Residues glutamate 16–lysine 40 are a coiled coil. The chain crosses the membrane as a helical span at residues leucine 46–leucine 66. The Lumenal segment spans residues proline 67 to threonine 77. Residues leucine 78–phenylalanine 98 form a helical membrane-spanning segment. The Cytoplasmic segment spans residues serine 99–glutamate 440. The stretch at arginine 100–threonine 128 forms a coiled coil. Residues leucine 149 to arginine 169 are disordered. Threonine 159 carries the phosphothreonine modification. Phosphoserine is present on residues serine 177, serine 179, serine 188, and serine 192. Position 198 is a phosphothreonine (threonine 198). The disordered stretch occupies residues glutamine 202–proline 247. Residues serine 206 and serine 215 each carry the phosphoserine modification. A compositionally biased stretch (polar residues) spans valine 216–leucine 225. Position 219 is a phosphothreonine (threonine 219). Phosphoserine occurs at positions 222 and 231. The C4-type; plays a role in ER morphology zinc finger occupies cysteine 280–cysteine 305. Residues proline 316–glutamate 440 form a disordered region. Residue serine 325 is modified to Phosphoserine. Residues aspartate 334–glutamine 343 are compositionally biased toward polar residues. 2 stretches are compositionally biased toward acidic residues: residues glutamine 370 to glutamate 411 and glutamate 431 to glutamate 440.

The protein belongs to the lunapark family. In terms of assembly, homodimer; homodimerization requires the C4-type zinc finger motif and decreases during mitosis in a phosphorylation-dependent manner. In terms of processing, phosphorylated. Phosphorylation at Thr-159 and Ser-325 occurs during interphase. Phosphorylation at Ser-177, Ser-179, Ser-188, Ser-192, Thr-198, Ser-206, Ser-215, Thr-219, Ser-222 and Ser-231 occurs during mitosis; these phosphorylations reduce both its homodimerization and the ER three-way tubular junction formation.

Its subcellular location is the endoplasmic reticulum membrane. Its function is as follows. Endoplasmic reticulum (ER)-shaping membrane protein that plays a role in determining ER morphology. Involved in the stabilization of nascent three-way ER tubular junctions within the ER network. May also play a role as a curvature-stabilizing protein within three-way ER tubular junction network. In Xenopus laevis (African clawed frog), this protein is Endoplasmic reticulum junction formation protein lunapark (lnpk).